Reading from the N-terminus, the 1793-residue chain is Brefeldin A-inhibited guanine nucleotide-exchange protein 2 (1793 aa).

Ala-2 bears the N-acetylalanine mark. 3 disordered regions span residues 45 to 71, 266 to 299, and 579 to 606; these read NSLQ…PGPL, TMSG…LLDS, and GSPQ…GGTS. Residues 55–66 show a composition bias toward low complexity; it reads SSAATDSESESS. Positions 270–281 are enriched in gly residues; that stretch reads SGSGSGSGGQDG. 2 stretches are compositionally biased toward polar residues: residues 284 to 294 and 594 to 605; these read GTTTVETTNPT and GSDTYSESSGGT. At Ser-595 the chain carries Phosphoserine. Residues 610–797 enclose the SEC7 domain; the sequence is AIEQRRAYKL…RSLYERITKH (188 aa). The active site involves Glu-712. The segment covering 1311 to 1327 has biased composition (polar residues); the sequence is NKYKGTSGKIPQSSLHS. The interval 1311–1333 is disordered; sequence NKYKGTSGKIPQSSLHSGKSGKQ.

Homodimer.

It is found in the cytoplasm. The protein resides in the cytosol. The protein localises to the membrane. Inhibited by brefeldin A. In terms of biological role, activates the ARF proteins by exchanging bound GDP for free GTP. Plays a role in vesicular protein sorting. The protein is Brefeldin A-inhibited guanine nucleotide-exchange protein 2 (BIG2) of Arabidopsis thaliana (Mouse-ear cress).